We begin with the raw amino-acid sequence, 393 residues long: Peroxisome biogenesis protein 12 (393 aa).

Over 1 to 13 (MLFQVGGEGTRPT) the chain is Peroxisomal matrix. Residues 14-41 (FFEMAAAQQLPASLRAALTYSLGVFALR) form a helical membrane-spanning segment. The Cytoplasmic portion of the chain corresponds to 42 to 44 (RSF). A helical transmembrane segment spans residues 45–69 (LHKILDYEDEFFAALMLILEGHSLR). Over 70 to 110 (TTDGSFAESLYGLRRKSARLRLRKDSARKDSSEEVQHSGLE) the chain is Peroxisomal matrix. The chain crosses the membrane as a helical span at residues 111–148 (KRQRILSVVFLVVLPYFKSKLHAIYNKEREARLRESLW). Topologically, residues 149-168 (GAEDQGFDEADFFTGDDSIV) are cytoplasmic. Residues 169 to 214 (SREPSGNEELSVRVQLATKIKKFIAVCYPWIHASSEGLSFTYQLLY) form a helical membrane-spanning segment. Residues 215-285 (LLDATGFYSL…SYAVLDYAQT (71 aa)) are Peroxisomal matrix-facing. Residues 286 to 312 (GLIAAVFIFKMMEWWYQSAEERLSAPT) traverse the membrane as a helical segment. Topologically, residues 313 to 393 (VYPPPPPPPA…DQIRRLFQDT (81 aa)) are cytoplasmic. Residues Cys339, Cys342, Cys360, and Cys363 each contribute to the Zn(2+) site. An RING-type; degenerate zinc finger spans residues 339–378 (CALCLQKRANPSVVTVSGFVFCYSCVFKYVSKYKRCPVTL).

The protein belongs to the pex2/pex10/pex12 family. Component of the PEX2-PEX10-PEX12 retrotranslocation channel. Interacts (via C-terminus) with PEX7. Interacts with DSK2a and DSK2b. In terms of tissue distribution, expressed in young seedlings, roots, leaves, seeds and flowers.

It is found in the peroxisome membrane. The protein operates within protein modification; protein ubiquitination. In terms of biological role, component of a retrotranslocation channel required for peroxisome organization by mediating export of the PEX5 receptor from peroxisomes to the cytosol, thereby promoting PEX5 recycling. The retrotranslocation channel is composed of PEX2, PEX10 and PEX12; each subunit contributing transmembrane segments that coassemble into an open channel that specifically allows the passage of PEX5 through the peroxisomal membrane. PEX12 also regulates PEX5 recycling by activating the E3 ubiquitin-protein ligase activity of PEX10. When PEX5 recycling is compromised, PEX12 stimulates PEX10-mediated polyubiquitination of PEX5, leading to its subsequent degradation. This chain is Peroxisome biogenesis protein 12 (PEX12), found in Arabidopsis thaliana (Mouse-ear cress).